A 301-amino-acid polypeptide reads, in one-letter code: Sulfate adenylyltransferase subunit 2 (301 aa).

This sequence belongs to the PAPS reductase family. CysD subfamily. As to quaternary structure, heterodimer composed of CysD, the smaller subunit, and CysN.

It carries out the reaction sulfate + ATP + H(+) = adenosine 5'-phosphosulfate + diphosphate. It functions in the pathway sulfur metabolism; hydrogen sulfide biosynthesis; sulfite from sulfate: step 1/3. With CysN forms the ATP sulfurylase (ATPS) that catalyzes the adenylation of sulfate producing adenosine 5'-phosphosulfate (APS) and diphosphate, the first enzymatic step in sulfur assimilation pathway. APS synthesis involves the formation of a high-energy phosphoric-sulfuric acid anhydride bond driven by GTP hydrolysis by CysN coupled to ATP hydrolysis by CysD. The polypeptide is Sulfate adenylyltransferase subunit 2 (Geobacter metallireducens (strain ATCC 53774 / DSM 7210 / GS-15)).